The primary structure comprises 256 residues: Thiazole synthase (256 aa).

Residue lysine 95 is the Schiff-base intermediate with DXP of the active site. 1-deoxy-D-xylulose 5-phosphate contacts are provided by residues glycine 156, 182–183 (AG), and 204–205 (NT).

The protein belongs to the ThiG family. As to quaternary structure, homotetramer. Forms heterodimers with either ThiH or ThiS.

It localises to the cytoplasm. The catalysed reaction is [ThiS sulfur-carrier protein]-C-terminal-Gly-aminoethanethioate + 2-iminoacetate + 1-deoxy-D-xylulose 5-phosphate = [ThiS sulfur-carrier protein]-C-terminal Gly-Gly + 2-[(2R,5Z)-2-carboxy-4-methylthiazol-5(2H)-ylidene]ethyl phosphate + 2 H2O + H(+). The protein operates within cofactor biosynthesis; thiamine diphosphate biosynthesis. Catalyzes the rearrangement of 1-deoxy-D-xylulose 5-phosphate (DXP) to produce the thiazole phosphate moiety of thiamine. Sulfur is provided by the thiocarboxylate moiety of the carrier protein ThiS. In vitro, sulfur can be provided by H(2)S. The polypeptide is Thiazole synthase (Salmonella arizonae (strain ATCC BAA-731 / CDC346-86 / RSK2980)).